A 357-amino-acid polypeptide reads, in one-letter code: UDP-N-acetylglucosamine--N-acetylmuramyl-(pentapeptide) pyrophosphoryl-undecaprenol N-acetylglucosamine transferase (357 aa).

Residues 13-15 (TGG), asparagine 125, arginine 161, serine 189, isoleucine 243, and glutamine 288 each bind UDP-N-acetyl-alpha-D-glucosamine.

This sequence belongs to the glycosyltransferase 28 family. MurG subfamily.

The protein localises to the cell inner membrane. It carries out the reaction di-trans,octa-cis-undecaprenyl diphospho-N-acetyl-alpha-D-muramoyl-L-alanyl-D-glutamyl-meso-2,6-diaminopimeloyl-D-alanyl-D-alanine + UDP-N-acetyl-alpha-D-glucosamine = di-trans,octa-cis-undecaprenyl diphospho-[N-acetyl-alpha-D-glucosaminyl-(1-&gt;4)]-N-acetyl-alpha-D-muramoyl-L-alanyl-D-glutamyl-meso-2,6-diaminopimeloyl-D-alanyl-D-alanine + UDP + H(+). The protein operates within cell wall biogenesis; peptidoglycan biosynthesis. Its function is as follows. Cell wall formation. Catalyzes the transfer of a GlcNAc subunit on undecaprenyl-pyrophosphoryl-MurNAc-pentapeptide (lipid intermediate I) to form undecaprenyl-pyrophosphoryl-MurNAc-(pentapeptide)GlcNAc (lipid intermediate II). This is UDP-N-acetylglucosamine--N-acetylmuramyl-(pentapeptide) pyrophosphoryl-undecaprenol N-acetylglucosamine transferase from Bordetella petrii (strain ATCC BAA-461 / DSM 12804 / CCUG 43448).